The following is a 604-amino-acid chain: Prostaglandin G/H synthase 2 (604 aa).

The N-terminal stretch at 1–17 (MLARALLLCAAVALSGA) is a signal peptide. The EGF-like domain occupies 18-55 (ANPCCSHPCQNRGVCMSVGFDQYKCDCTRTGFYGENCT). Disulfide bonds link Cys-21–Cys-32, Cys-22–Cys-145, Cys-26–Cys-42, and Cys-44–Cys-54. N-linked (GlcNAc...) asparagine glycosylation is present at Asn-53. Residue Arg-106 participates in substrate binding. N-linked (GlcNAc...) asparagine glycosylation occurs at Asn-130. The active-site Proton acceptor is the His-193. A substrate-binding site is contributed by Tyr-341. Tyr-371 acts as the For cyclooxygenase activity in catalysis. His-374 contacts heme b. Asn-396 carries an N-linked (GlcNAc...) asparagine glycan. Position 526 is an S-nitrosocysteine (Cys-526). Cys-555 and Cys-561 are disulfide-bonded. Ser-565 carries the post-translational modification O-acetylserine. N-linked (GlcNAc...) asparagine glycosylation is present at Asn-580.

Belongs to the prostaglandin G/H synthase family. As to quaternary structure, homodimer. Heme b is required as a cofactor. S-nitrosylation by NOS2 (iNOS) activates enzyme activity. S-nitrosylation may take place on different Cys residues in addition to Cys-526. Post-translationally, acetylated at Ser-565 by SPHK1. During neuroinflammation, acetylation by SPHK1 promotes neuronal secretion of specialized preresolving mediators (SPMs), especially 15-R-lipoxin A4, which results in an increase of phagocytic microglia.

The protein resides in the microsome membrane. The protein localises to the endoplasmic reticulum membrane. It localises to the nucleus inner membrane. It is found in the nucleus outer membrane. The enzyme catalyses (5Z,8Z,11Z,14Z)-eicosatetraenoate + AH2 + 2 O2 = prostaglandin H2 + A + H2O. The catalysed reaction is (5Z,8Z,11Z,14Z)-eicosatetraenoate + 2 O2 = prostaglandin G2. It carries out the reaction prostaglandin G2 + AH2 = prostaglandin H2 + A + H2O. It catalyses the reaction (5Z,8Z,11Z,14Z,17Z)-eicosapentaenoate + 2 O2 = prostaglandin G3. The enzyme catalyses prostaglandin G3 + AH2 = prostaglandin H3 + A + H2O. The catalysed reaction is (8Z,11Z,14Z)-eicosatrienoate + 2 O2 = prostaglandin G1. It carries out the reaction prostaglandin G1 + AH2 = prostaglandin H1 + A + H2O. It catalyses the reaction 2-(5Z,8Z,11Z,14Z)-eicosatetraenoyl-sn-glycero-3-phosphoethanolamine + 2 O2 = 2-(prostaglandin G2)-sn-glycero-3-phosphoethanolamine. The enzyme catalyses 2-(prostaglandin G2)-sn-glycero-3-phosphoethanolamine + AH2 = 2-(prostaglandin H2)-sn-glycero-3-phosphoethanolamine + A + H2O. The catalysed reaction is 2-(5Z,8Z,11Z,14Z)-eicosatetraenoyl-sn-glycero-3-phosphocholine + 2 O2 = 2-(prostaglandin G2)-sn-glycero-3-phosphocholine. It carries out the reaction 2-(prostaglandin G2)-sn-glycero-3-phosphocholine + AH2 = 2-(prostaglandin H2)-sn-glycero-3-phosphocholine + A + H2O. It catalyses the reaction (15S)-hydroperoxy-(5Z,8Z,11Z,13E)-eicosatetraenoate + AH2 = (15S)-hydroxy-(5Z,8Z,11Z,13E)-eicosatetraenoate + A + H2O. The enzyme catalyses 2-(5Z,8Z,11Z,14Z)-eicosatetraenoyl-sn-glycero-3-phosphocholine + AH2 + O2 = 2-[(15S)-hydroxy-(5Z,8Z,11Z,13E)-eicosatetraenoyl]-sn-glycero-3-phosphocholine + A + H2O. The catalysed reaction is 2-(5Z,8Z,11Z,14Z)-eicosatetraenoyl-sn-glycero-3-phosphocholine + AH2 + O2 = 2-[(15R)-hydroxy-(5Z,8Z,11Z,13E)-eicosatetraenoyl]-sn-glycero-3-phosphocholine + A + H2O. It carries out the reaction 2-(5Z,8Z,11Z,14Z)-eicosatetraenoyl-sn-glycero-3-phosphocholine + AH2 + O2 = 2-[(11R)-hydroxy-(5Z,8Z,12E,14Z)-eicosatetraenoyl]-sn-glycero-3-phosphocholine + A + H2O. It catalyses the reaction (9Z,12Z)-octadecadienoate + AH2 + O2 = 9-hydroxy-(10E,12Z)-octadecadienoate + A + H2O. The enzyme catalyses (9Z,12Z)-octadecadienoate + AH2 + O2 = 13-hydroxy-(9Z,11E)-octadecadienoate + A + H2O. The catalysed reaction is (5Z,8Z,11Z,14Z)-eicosatetraenoate + AH2 + O2 = (15R)-hydroxy-(5Z,8Z,11Z,13E)-eicosatetraenoate + A + H2O. It carries out the reaction (5Z,8Z,11Z,14Z)-eicosatetraenoate + AH2 + O2 = (11R)-hydroxy-(5Z,8Z,12E,14Z)-eicosatetraenoate + A + H2O. It catalyses the reaction (5Z,8Z,11Z,14Z,17Z)-eicosapentaenoate + AH2 + O2 = (11R)-hydroxy-(5Z,8Z,12E,14Z,17Z)-eicosapentaenoate + A + H2O. The enzyme catalyses (5Z,8Z,11Z,14Z,17Z)-eicosapentaenoate + AH2 + O2 = (18S)-hydroxy-(5Z,8Z,11Z,14Z,16E)-eicosapentaenoate + A + H2O. The catalysed reaction is (5Z,8Z,11Z,14Z,17Z)-eicosapentaenoate + AH2 + O2 = (18R)-hydroxy-(5Z,8Z,11Z,14Z,16E)-eicosapentaenoate + A + H2O. It carries out the reaction (5Z,8Z,11Z,14Z,17Z)-eicosapentaenoate + AH2 + O2 = (15R)-hydroxy-(5Z,8Z,11Z,13E,17Z)-eicosapentaenoate + A + H2O. It catalyses the reaction (5Z,8Z,11Z,14Z,17Z)-eicosapentaenoate + AH2 + O2 = (15S)-hydroxy-(5Z,8Z,11Z,13E,17Z)-eicosapentaenoate + A + H2O. The enzyme catalyses (7Z,10Z,13Z,16Z,19Z)-docosapentaenoate + AH2 + O2 = 13R-hydroxy-(7Z,10Z,14E,16Z,19Z)-docosapentaenoate + A + H2O. The catalysed reaction is (4Z,7Z,10Z,13Z,16Z,19Z)-docosahexaenoate + AH2 + O2 = 13-hydroxy-(4Z,7Z,10Z,14E,16Z,19Z)-docosahexaenoate + A + H2O. It carries out the reaction (5S)-hydroxy-(6E,8Z,11Z,14Z)-eicosatetraenoate + AH2 + O2 = (5S,15R)-dihydroxy-(6E,8Z,11Z,13E)-eicosatetraenoate + A + H2O. It catalyses the reaction (4Z,7Z,10Z,13Z,16Z,19Z)-docosahexaenoate + AH2 + O2 = 17R-hydroxy-(4Z,7Z,10Z,13Z,15E,19Z)-docosahexaenoate + A + H2O. The enzyme catalyses (5S)-hydroxy-(6E,8Z,11Z,14Z)-eicosatetraenoate + AH2 + O2 = (5S,15S)-dihydroxy-(6E,8Z,11Z,13E)-eicosatetraenoate + A + H2O. The catalysed reaction is (5S)-hydroxy-(6E,8Z,11Z,14Z)-eicosatetraenoate + AH2 + O2 = (5S,11R)-dihydroxy-(6E,8Z,12E,14Z)-eicosatetraenoate + A + H2O. It carries out the reaction 2-(5Z,8Z,11Z,14Z-eicosatetraenoyl)-glycerol + 2 O2 = 2-glyceryl-prostaglandin G2. It catalyses the reaction 2-glyceryl-prostaglandin G2 + AH2 = 2-glyceryl-prostaglandin H2 + A + H2O. The enzyme catalyses (5Z,8Z,11Z,14Z)-eicosatetraenoate + O2 = (15R)-hydroperoxy-(5Z,8Z,11Z,13E)-eicosatetraenoate. The catalysed reaction is (5Z,8Z,11Z,14Z)-eicosatetraenoate + O2 = 11R-hydroperoxy-(5Z,8Z,12E,14Z)-eicosatetraenoate. It carries out the reaction (9Z,12Z)-octadecadienoate + AH2 + O2 = (9R)-hydroxy-(10E,12Z)-octadecadienoate + A + H2O. It catalyses the reaction (9Z,12Z)-octadecadienoate + AH2 + O2 = (9S)-hydroxy-(10E,12Z)-octadecadienoate + A + H2O. The enzyme catalyses (9Z,12Z)-octadecadienoate + AH2 + O2 = (13S)-hydroxy-(9Z,11E)-octadecadienoate + A + H2O. The catalysed reaction is (9Z,12Z)-octadecadienoate + AH2 + O2 = (13R)-hydroxy-(9Z,11E)-octadecadienoate + A + H2O. The protein operates within lipid metabolism; prostaglandin biosynthesis. In terms of biological role, dual cyclooxygenase and peroxidase in the biosynthesis pathway of prostanoids, a class of C20 oxylipins mainly derived from arachidonate ((5Z,8Z,11Z,14Z)-eicosatetraenoate, AA, C20:4(n-6)), with a particular role in the inflammatory response. The cyclooxygenase activity oxygenates AA to the hydroperoxy endoperoxide prostaglandin G2 (PGG2), and the peroxidase activity reduces PGG2 to the hydroxy endoperoxide prostaglandin H2 (PGH2), the precursor of all 2-series prostaglandins and thromboxanes. This complex transformation is initiated by abstraction of hydrogen at carbon 13 (with S-stereochemistry), followed by insertion of molecular O2 to form the endoperoxide bridge between carbon 9 and 11 that defines prostaglandins. The insertion of a second molecule of O2 (bis-oxygenase activity) yields a hydroperoxy group in PGG2 that is then reduced to PGH2 by two electrons. Similarly catalyzes successive cyclooxygenation and peroxidation of dihomo-gamma-linoleate (DGLA, C20:3(n-6)) and eicosapentaenoate (EPA, C20:5(n-3)) to corresponding PGH1 and PGH3, the precursors of 1- and 3-series prostaglandins. In an alternative pathway of prostanoid biosynthesis, converts 2-arachidonoyl lysophopholipids to prostanoid lysophopholipids, which are then hydrolyzed by intracellular phospholipases to release free prostanoids. Metabolizes 2-arachidonoyl glycerol yielding the glyceryl ester of PGH2, a process that can contribute to pain response. Generates lipid mediators from n-3 and n-6 polyunsaturated fatty acids (PUFAs) via a lipoxygenase-type mechanism. Oxygenates PUFAs to hydroperoxy compounds and then reduces them to corresponding alcohols. Plays a role in the generation of resolution phase interaction products (resolvins) during both sterile and infectious inflammation. Metabolizes docosahexaenoate (DHA, C22:6(n-3)) to 17R-HDHA, a precursor of the D-series resolvins (RvDs). As a component of the biosynthetic pathway of E-series resolvins (RvEs), converts eicosapentaenoate (EPA, C20:5(n-3)) primarily to 18S-HEPE that is further metabolized by ALOX5 and LTA4H to generate 18S-RvE1 and 18S-RvE2. In vascular endothelial cells, converts docosapentaenoate (DPA, C22:5(n-3)) to 13R-HDPA, a precursor for 13-series resolvins (RvTs) shown to activate macrophage phagocytosis during bacterial infection. In activated leukocytes, contributes to oxygenation of hydroxyeicosatetraenoates (HETE) to diHETES (5,15-diHETE and 5,11-diHETE). Can also use linoleate (LA, (9Z,12Z)-octadecadienoate, C18:2(n-6)) as substrate and produce hydroxyoctadecadienoates (HODEs) in a regio- and stereospecific manner, being (9R)-HODE ((9R)-hydroxy-(10E,12Z)-octadecadienoate) and (13S)-HODE ((13S)-hydroxy-(9Z,11E)-octadecadienoate) its major products. During neuroinflammation, plays a role in neuronal secretion of specialized preresolving mediators (SPMs) 15R-lipoxin A4 that regulates phagocytic microglia. The polypeptide is Prostaglandin G/H synthase 2 (PTGS2) (Bos taurus (Bovine)).